The chain runs to 343 residues: tRNA N6-adenosine threonylcarbamoyltransferase (343 aa).

Fe cation contacts are provided by His-114 and His-118. Substrate contacts are provided by residues 137-141 (LVSGG), Asp-171, Gly-184, Asp-188, and Asn-278. Asp-306 contributes to the Fe cation binding site.

Belongs to the KAE1 / TsaD family. Fe(2+) is required as a cofactor.

Its subcellular location is the cytoplasm. The catalysed reaction is L-threonylcarbamoyladenylate + adenosine(37) in tRNA = N(6)-L-threonylcarbamoyladenosine(37) in tRNA + AMP + H(+). Required for the formation of a threonylcarbamoyl group on adenosine at position 37 (t(6)A37) in tRNAs that read codons beginning with adenine. Is involved in the transfer of the threonylcarbamoyl moiety of threonylcarbamoyl-AMP (TC-AMP) to the N6 group of A37, together with TsaE and TsaB. TsaD likely plays a direct catalytic role in this reaction. This chain is tRNA N6-adenosine threonylcarbamoyltransferase, found in Acidothermus cellulolyticus (strain ATCC 43068 / DSM 8971 / 11B).